A 585-amino-acid chain; its full sequence is Zinc finger protein C11D3.17 (585 aa).

2 C2H2-type zinc fingers span residues 31–53 and 59–82; these read FPCDQCAKRFTRHENLTRHKACH and IPCPYCEIKCKRKDLLKRHIQRFH. Thr553 carries the phosphothreonine modification.

Its subcellular location is the nucleus. The polypeptide is Zinc finger protein C11D3.17 (Schizosaccharomyces pombe (strain 972 / ATCC 24843) (Fission yeast)).